Here is a 1173-residue protein sequence, read N- to C-terminus: DNA polymerase catalytic subunit (1173 aa).

Disordered stretches follow at residues 554–625 (PSLP…SASG) and 1123–1144 (EGPG…PPRK). Residues 564 to 578 (GGDGAGLEGGDGGTA) show a composition bias toward gly residues. Positions 591–606 (DGEDEDDPEGGDEGEN) are enriched in acidic residues. Basic and acidic residues predominate over residues 607–618 (GECRENGLEKEG). Over residues 1123–1138 (EGPGRGEGLGVGGGEG) the composition is skewed to gly residues.

Belongs to the DNA polymerase type-B family.

The protein localises to the host nucleus. It catalyses the reaction DNA(n) + a 2'-deoxyribonucleoside 5'-triphosphate = DNA(n+1) + diphosphate. This chain is DNA polymerase catalytic subunit (UL54), found in Rattus.